The chain runs to 923 residues: RNA polymerase-associated protein RapA (923 aa).

Residues 162–332 (EVGNRVNPRV…FARLRLLDPE (171 aa)) form the Helicase ATP-binding domain. 175–182 (DEVGLGKT) is a binding site for ATP. The short motif at 278 to 281 (DEAH) is the DEAH box element. Residues 443–597 (KIDWLIDFLK…TCPMGMALFS (155 aa)) form the Helicase C-terminal domain.

The protein belongs to the SNF2/RAD54 helicase family. RapA subfamily. As to quaternary structure, interacts with the RNAP. Has a higher affinity for the core RNAP than for the holoenzyme. Its ATPase activity is stimulated by binding to RNAP.

Transcription regulator that activates transcription by stimulating RNA polymerase (RNAP) recycling in case of stress conditions such as supercoiled DNA or high salt concentrations. Probably acts by releasing the RNAP, when it is trapped or immobilized on tightly supercoiled DNA. Does not activate transcription on linear DNA. Probably not involved in DNA repair. The polypeptide is RNA polymerase-associated protein RapA (Haemophilus influenzae (strain PittEE)).